A 188-amino-acid chain; its full sequence is Elongation factor P (188 aa).

Lys-34 carries the post-translational modification N6-(3,6-diaminohexanoyl)-5-hydroxylysine.

The protein belongs to the elongation factor P family. May be beta-lysylated on the epsilon-amino group of Lys-34 by the combined action of EpmA and EpmB, and then hydroxylated on the C5 position of the same residue by EpmC (if this protein is present). Lysylation is critical for the stimulatory effect of EF-P on peptide-bond formation. The lysylation moiety may extend toward the peptidyltransferase center and stabilize the terminal 3-CCA end of the tRNA. Hydroxylation of the C5 position on Lys-34 may allow additional potential stabilizing hydrogen-bond interactions with the P-tRNA.

The protein resides in the cytoplasm. Its pathway is protein biosynthesis; polypeptide chain elongation. In terms of biological role, involved in peptide bond synthesis. Alleviates ribosome stalling that occurs when 3 or more consecutive Pro residues or the sequence PPG is present in a protein, possibly by augmenting the peptidyl transferase activity of the ribosome. Modification of Lys-34 is required for alleviation. The polypeptide is Elongation factor P (Coxiella burnetii (strain CbuK_Q154) (Coxiella burnetii (strain Q154))).